We begin with the raw amino-acid sequence, 1403 residues long: Baculoviral IAP repeat-containing protein 1f (1403 aa).

3 BIR repeats span residues 60–127 (EAKR…CEFL), 159–227 (EEAR…CEFL), and 278–345 (EELR…CVFL). Zn(2+)-binding residues include cysteine 315, cysteine 318, histidine 335, and cysteine 342. Residues 464-759 (SVMCVEGEAG…EFLAAVRLTE (296 aa)) enclose the NACHT domain. Residue 473–478 (GSGKTT) coordinates ATP.

Component of the NLRC4 inflammasome, at least composed of NLRC4, caspase-1 (CASP1) and some NAIP protein. In terms of assembly, (Microbial infection) Interacts with S.typhimurium (Salmonella) flagellin.

Its function is as follows. Sensor component of the NLRC4 inflammasome that specifically recognizes and binds flagellin from pathogenic bacteria. Association of pathogenic bacteria proteins drives in turn drive assembly and activation of the NLRC4 inflammasome, promoting caspase-1 activation, cytokine production and macrophage pyroptosis. The NLRC4 inflammasome is activated as part of the innate immune response to a range of intracellular bacteria. The NLRC4 inflammasome senses Gram-negative bacteria such as L.pneumophila and P.aeruginosa, enteric pathogens S.typhimurium (Salmonella) and S.flexneri. May contribute to prevent motor-neuron apoptosis induced by a variety of signals. This chain is Baculoviral IAP repeat-containing protein 1f (Naip6), found in Mus musculus (Mouse).